The primary structure comprises 631 residues: Probable potassium transport system protein Kup (631 aa).

The next 12 membrane-spanning stretches (helical) occupy residues 17–37 (IGLLIAAVGVVYGDIGTSPLY), 56–76 (ILGVLSLIFWSLIWVVSFKYM), 109–129 (MMMVVFGLFGAALFYGDSMIT), 147–167 (GLDHWIVPMALVVLVGLFLIQ), 174–194 (IGVLFGPVMVVWFLVLGALGV), 215–235 (FFIIHPGIGVAILGAVVLALT), 256–276 (WFILVLPALLLNYFGQGALVL), 288–308 (LLAPSWALLPLIGLSTMATII), 346–366 (IYIGAVNWALMVGVIMLVIGF), 378–398 (VAVTGTMLCTTILVSTVMLML), 403–423 (PLLAVPLLICLLLVDGLFFAA), and 428–448 (IFQGGAFPVLAGAVLFILMTT).

Belongs to the HAK/KUP transporter (TC 2.A.72) family.

It localises to the cell inner membrane. The catalysed reaction is K(+)(in) + H(+)(in) = K(+)(out) + H(+)(out). Functionally, transport of potassium into the cell. Likely operates as a K(+):H(+) symporter. The chain is Probable potassium transport system protein Kup from Pseudomonas syringae pv. tomato (strain ATCC BAA-871 / DC3000).